Consider the following 598-residue polypeptide: Elongation factor 4 (598 aa).

The tr-type G domain maps to 4–181 (KKIRNFAIIA…AIVNLIPPPQ (178 aa)). Residues 16–21 (DHGKST) and 128–131 (NKID) each bind GTP.

It belongs to the TRAFAC class translation factor GTPase superfamily. Classic translation factor GTPase family. LepA subfamily.

It localises to the cell membrane. The enzyme catalyses GTP + H2O = GDP + phosphate + H(+). Required for accurate and efficient protein synthesis under certain stress conditions. May act as a fidelity factor of the translation reaction, by catalyzing a one-codon backward translocation of tRNAs on improperly translocated ribosomes. Back-translocation proceeds from a post-translocation (POST) complex to a pre-translocation (PRE) complex, thus giving elongation factor G a second chance to translocate the tRNAs correctly. Binds to ribosomes in a GTP-dependent manner. The chain is Elongation factor 4 from Mesomycoplasma hyopneumoniae (strain 232) (Mycoplasma hyopneumoniae).